Reading from the N-terminus, the 245-residue chain is Orotidine 5'-phosphate decarboxylase (245 aa).

Residues D22, K44, 71–80 (DLKFHDIPNT), T131, R192, Q201, G221, and R222 each bind substrate. K73 serves as the catalytic Proton donor.

It belongs to the OMP decarboxylase family. Type 1 subfamily. As to quaternary structure, homodimer.

It catalyses the reaction orotidine 5'-phosphate + H(+) = UMP + CO2. It functions in the pathway pyrimidine metabolism; UMP biosynthesis via de novo pathway; UMP from orotate: step 2/2. Functionally, catalyzes the decarboxylation of orotidine 5'-monophosphate (OMP) to uridine 5'-monophosphate (UMP). The chain is Orotidine 5'-phosphate decarboxylase from Escherichia coli O139:H28 (strain E24377A / ETEC).